The following is a 298-amino-acid chain: Protoheme IX farnesyltransferase (298 aa).

The next 9 helical transmembrane spans lie at 26-46 (VVSLIVFTAVIGMFLSVPGVV), 52-72 (IFATVGIAFVAGAAAAVNCLV), 99-119 (FVFLALVGGAGLLILHQLVNP), 120-140 (LTMWLTLGTFVGYAIIYTVIL), 148-168 (IVIGGASGAMPPVLGWAAVTG), 174-194 (ALLLFLIIFAWTPPHFWALAL), 219-239 (LHVLLYTLILIAVTLMPYATQ), 241-261 (SGLIYLAGAIVLDVIFLYYAV), and 276-296 (FRYSILYLAGLFAVLLVDHYI).

This sequence belongs to the UbiA prenyltransferase family. Protoheme IX farnesyltransferase subfamily.

The protein resides in the cell inner membrane. It carries out the reaction heme b + (2E,6E)-farnesyl diphosphate + H2O = Fe(II)-heme o + diphosphate. It participates in porphyrin-containing compound metabolism; heme O biosynthesis; heme O from protoheme: step 1/1. Its function is as follows. Converts heme B (protoheme IX) to heme O by substitution of the vinyl group on carbon 2 of heme B porphyrin ring with a hydroxyethyl farnesyl side group. The polypeptide is Protoheme IX farnesyltransferase (Nitrosospira multiformis (strain ATCC 25196 / NCIMB 11849 / C 71)).